Here is a 511-residue protein sequence, read N- to C-terminus: Cytochrome P450 705A5 (511 aa).

A helical membrane pass occupies residues 12–30 (CFIFLLLCLFSRLSYDLFF). Cys-454 is a heme binding site.

Belongs to the cytochrome P450 family. Heme is required as a cofactor. As to expression, expressed primarily in the root epidermis.

The protein localises to the membrane. Converts thalian-diol to a desaturated thalian-diol. This Arabidopsis thaliana (Mouse-ear cress) protein is Cytochrome P450 705A5 (CYP705A5).